The primary structure comprises 119 residues: V-type proton ATPase subunit F (119 aa).

It belongs to the V-ATPase F subunit family. V-ATPase is a heteromultimeric enzyme composed of a peripheral catalytic V1 complex (components A to H) attached to an integral membrane V0 proton pore complex (components: a, c, c', c'', d, e, f and VOA1).

Its subcellular location is the vacuole membrane. Functionally, subunit of the V1 complex of vacuolar(H+)-ATPase (V-ATPase), a multisubunit enzyme composed of a peripheral complex (V1) that hydrolyzes ATP and a membrane integral complex (V0) that translocates protons. V-ATPase is responsible for acidifying and maintaining the pH of intracellular compartments. The protein is V-type proton ATPase subunit F (VMA7) of Vanderwaltozyma polyspora (strain ATCC 22028 / DSM 70294 / BCRC 21397 / CBS 2163 / NBRC 10782 / NRRL Y-8283 / UCD 57-17) (Kluyveromyces polysporus).